A 215-amino-acid polypeptide reads, in one-letter code: MKTVLITAFEPFEGEAINPSWEAVKVLHQREVGGARVVACRLSCVFDLSLEELYRAIAEWQPEVVIAVGQAGGRTDISVERVAININDARIADNRGNQPIDTPIVEKGPAAYFSTLPVKALVQALRVAGIPASVSQTAGTFVCNHVMYGLLHQLHQQGDVVRGGFVHIPYSPEQAARHPGEPSMPTPLVTAALEVMIKQSLAQQVDVAVTGGALH.

Residues E80, C143, and H167 contribute to the active site.

It belongs to the peptidase C15 family. Homotetramer.

It localises to the cytoplasm. It carries out the reaction Release of an N-terminal pyroglutamyl group from a polypeptide, the second amino acid generally not being Pro.. In terms of biological role, removes 5-oxoproline from various penultimate amino acid residues except L-proline. The polypeptide is Pyrrolidone-carboxylate peptidase (Pectobacterium carotovorum subsp. carotovorum (strain PC1)).